The chain runs to 448 residues: Probable cytosolic Fe-S cluster assembly factor Bm6838 (448 aa).

[4Fe-4S] cluster is bound by residues cysteine 27, cysteine 66, cysteine 69, cysteine 72, cysteine 170, cysteine 226, cysteine 370, and cysteine 374.

Belongs to the NARF family.

Functionally, component of the cytosolic iron-sulfur (Fe/S) protein assembly machinery. Required for maturation of extramitochondrial Fe/S proteins. This Brugia malayi (Filarial nematode worm) protein is Probable cytosolic Fe-S cluster assembly factor Bm6838.